We begin with the raw amino-acid sequence, 181 residues long: Alkyl hydroperoxide reductase AhpD (181 aa).

Residue Cys-131 is the Proton donor of the active site. Residues Cys-131 and Cys-134 are joined by a disulfide bond. Cys-134 serves as the catalytic Cysteine sulfenic acid (-SOH) intermediate.

This sequence belongs to the AhpD family.

The catalysed reaction is N(6)-[(R)-dihydrolipoyl]-L-lysyl-[lipoyl-carrier protein] + a hydroperoxide = N(6)-[(R)-lipoyl]-L-lysyl-[lipoyl-carrier protein] + an alcohol + H2O. Functionally, antioxidant protein with alkyl hydroperoxidase activity. Required for the reduction of the AhpC active site cysteine residues and for the regeneration of the AhpC enzyme activity. The sequence is that of Alkyl hydroperoxide reductase AhpD from Bradyrhizobium sp. (strain ORS 278).